A 130-amino-acid polypeptide reads, in one-letter code: Small ribosomal subunit protein uS8 (130 aa).

The protein belongs to the universal ribosomal protein uS8 family. Part of the 30S ribosomal subunit. Contacts proteins S5 and S12.

In terms of biological role, one of the primary rRNA binding proteins, it binds directly to 16S rRNA central domain where it helps coordinate assembly of the platform of the 30S subunit. The protein is Small ribosomal subunit protein uS8 of Vibrio parahaemolyticus serotype O3:K6 (strain RIMD 2210633).